The following is a 186-amino-acid chain: Large ribosomal subunit protein uL5 (186 aa).

The protein belongs to the universal ribosomal protein uL5 family. In terms of assembly, part of the 50S ribosomal subunit; part of the 5S rRNA/L5/L18/L25 subcomplex. Contacts the 5S rRNA and the P site tRNA. Forms a bridge to the 30S subunit in the 70S ribosome.

Functionally, this is one of the proteins that bind and probably mediate the attachment of the 5S RNA into the large ribosomal subunit, where it forms part of the central protuberance. In the 70S ribosome it contacts protein S13 of the 30S subunit (bridge B1b), connecting the 2 subunits; this bridge is implicated in subunit movement. Contacts the P site tRNA; the 5S rRNA and some of its associated proteins might help stabilize positioning of ribosome-bound tRNAs. In Legionella pneumophila subsp. pneumophila (strain Philadelphia 1 / ATCC 33152 / DSM 7513), this protein is Large ribosomal subunit protein uL5.